Consider the following 362-residue polypeptide: Prostaglandin E2 receptor EP2 subtype (362 aa).

At 1 to 24 (MDNFLNDSKLMEDCKSRQWLLSGE) the chain is on the extracellular side. A glycan (N-linked (GlcNAc...) asparagine) is linked at Asn-6. The helical transmembrane segment at 25 to 48 (SPAISSVMFSAGVLGNLIALALLA) threads the bilayer. Residues 49–66 (RRWRGDTGCSAGSRTSIS) lie on the Cytoplasmic side of the membrane. A helical membrane pass occupies residues 67–92 (LFHVLVTELVLTDLLGTCLISPVVLA). Residues 93–112 (SYSRNQTLVALAPESHACTY) lie on the Extracellular side of the membrane. A disulfide bridge connects residues Cys-110 and Cys-188. A helical membrane pass occupies residues 113-133 (FAFTMTFFSLATMLMLFAMAL). Residues 134-152 (ERYLSIGYPYFYRRHLSRR) are Cytoplasmic-facing. A helical transmembrane segment spans residues 153–177 (GGLAVLPVIYGASLLFCSLPLLNYG). The Extracellular segment spans residues 178-199 (EYVQYCPGTWCFIRHGRTAYLQ). Residues 200-224 (LYATMLLLLIVAVLACNISVILNLI) traverse the membrane as a helical segment. Residues 225 to 262 (RMHRRSRRSRCGLSGSSLRGPGSRRRGERTSMAEETDH) are Cytoplasmic-facing. The interval 234–255 (RCGLSGSSLRGPGSRRRGERTS) is disordered. A compositionally biased stretch (low complexity) spans 235 to 245 (CGLSGSSLRGP). A helical membrane pass occupies residues 263–286 (LILLAIMTITFAICSLPFTIFAYM). Topologically, residues 287–299 (DETSSLKEKWDLR) are extracellular. Residues 300-323 (ALRFLSVNSIIDPWVFAILRPPVL) traverse the membrane as a helical segment. The Cytoplasmic portion of the chain corresponds to 324 to 362 (RLMRSVLCCRTSLRTQEAQQTSCSTQSSASKQTDLCGQL).

Belongs to the G-protein coupled receptor 1 family.

Its subcellular location is the cell membrane. Its function is as follows. Receptor for prostaglandin E2 (PGE2). The activity of this receptor is mediated by G(s) proteins that stimulate adenylate cyclase. The subsequent raise in intracellular cAMP is responsible for the relaxing effect of this receptor on smooth muscle. This chain is Prostaglandin E2 receptor EP2 subtype (Ptger2), found in Mus musculus (Mouse).